Here is a 138-residue protein sequence, read N- to C-terminus: Small ribosomal subunit protein uS12 (138 aa).

Positions 33-55 are disordered; the sequence is KEHTNVSSPQKRGVCTRVGTMTP.

This sequence belongs to the universal ribosomal protein uS12 family. In terms of assembly, part of the 30S ribosomal subunit. Contacts proteins S8 and S17. May interact with IF1 in the 30S initiation complex. Interacts with BrxC.

Its function is as follows. With S4 and S5 plays an important role in translational accuracy. Interacts with and stabilizes bases of the 16S rRNA that are involved in tRNA selection in the A site and with the mRNA backbone. Located at the interface of the 30S and 50S subunits, it traverses the body of the 30S subunit contacting proteins on the other side and probably holding the rRNA structure together. The combined cluster of proteins S8, S12 and S17 appears to hold together the shoulder and platform of the 30S subunit. In Bacillus subtilis (strain 168), this protein is Small ribosomal subunit protein uS12 (rpsL).